Consider the following 497-residue polypeptide: NAD(P)H-quinone oxidoreductase chain 4, chloroplastic (497 aa).

14 helical membrane passes run 5-25 (VPWL…IPIL), 36-56 (YTLG…YCHF), 88-108 (LGLV…AWPI), 112-132 (TRLF…LFVS), 135-155 (ILLF…LLCL), 168-188 (FVLY…TMSF), 212-232 (VLIY…FPFH), 243-263 (HYST…YGLI), 275-295 (FLLG…ASLI), 306-326 (IAYS…SFTE), 331-351 (GAIL…FLAG), 387-407 (LALP…GVVT), 418-438 (GITV…LSML), and 463-483 (LFIL…PNLI).

Belongs to the complex I subunit 4 family.

Its subcellular location is the plastid. The protein localises to the chloroplast thylakoid membrane. It carries out the reaction a plastoquinone + NADH + (n+1) H(+)(in) = a plastoquinol + NAD(+) + n H(+)(out). It catalyses the reaction a plastoquinone + NADPH + (n+1) H(+)(in) = a plastoquinol + NADP(+) + n H(+)(out). This chain is NAD(P)H-quinone oxidoreductase chain 4, chloroplastic, found in Adiantum capillus-veneris (Maidenhair fern).